Reading from the N-terminus, the 89-residue chain is Putative membrane protein insertion efficiency factor (89 aa).

A disordered region spans residues 68-89 (VPPPNSDARNAPHEAEASSHRL). The segment covering 77-89 (NAPHEAEASSHRL) has biased composition (basic and acidic residues).

Belongs to the UPF0161 family.

It is found in the cell inner membrane. Functionally, could be involved in insertion of integral membrane proteins into the membrane. This chain is Putative membrane protein insertion efficiency factor, found in Burkholderia mallei (strain SAVP1).